Here is a 327-residue protein sequence, read N- to C-terminus: Phospho-N-acetylmuramoyl-pentapeptide-transferase (327 aa).

The next 10 membrane-spanning stretches (helical) occupy residues 3 to 23 (IALI…PAFI), 51 to 71 (TMGG…IGLF), 75 to 95 (LSNG…VGFL), 115 to 135 (LFLQ…HGAG), 140 to 160 (IFTV…FWLI), 172 to 192 (IDGL…VIAV), 197 to 217 (FDIL…FVFN), 223 to 243 (IFMG…ISIS), 248 to 268 (WTLL…MMQV), and 306 to 326 (VDFF…AILY).

It belongs to the glycosyltransferase 4 family. MraY subfamily. Requires Mg(2+) as cofactor.

It localises to the cell membrane. It catalyses the reaction UDP-N-acetyl-alpha-D-muramoyl-L-alanyl-gamma-D-glutamyl-L-lysyl-D-alanyl-D-alanine + di-trans,octa-cis-undecaprenyl phosphate = Mur2Ac(oyl-L-Ala-gamma-D-Glu-L-Lys-D-Ala-D-Ala)-di-trans,octa-cis-undecaprenyl diphosphate + UMP. Its pathway is cell wall biogenesis; peptidoglycan biosynthesis. In terms of biological role, catalyzes the initial step of the lipid cycle reactions in the biosynthesis of the cell wall peptidoglycan: transfers peptidoglycan precursor phospho-MurNAc-pentapeptide from UDP-MurNAc-pentapeptide onto the lipid carrier undecaprenyl phosphate, yielding undecaprenyl-pyrophosphoryl-MurNAc-pentapeptide, known as lipid I. The protein is Phospho-N-acetylmuramoyl-pentapeptide-transferase of Streptococcus sanguinis (strain SK36).